A 394-amino-acid polypeptide reads, in one-letter code: Metal tolerance protein 11 (394 aa).

Over 1–103 (MVEPASPDSD…EQDNLAKSET (103 aa)) the chain is Cytoplasmic. The helical transmembrane segment at 104 to 124 (LAIRISNIANMLLFAAKVYAS) threads the bilayer. The Vacuolar segment spans residues 125–130 (VTSGSL). Residues 131–151 (AIIASTLDSLLDLLSGFILWF) traverse the membrane as a helical segment. The Cytoplasmic segment spans residues 152–172 (TAFSMQTPNPYQYPIGKKRMQ). Residues 173-193 (PLGILVFASVMATLGLQIILE) traverse the membrane as a helical segment. Residues 194 to 212 (SLRTMLSSHKEFNLTKEQE) lie on the Vacuolar side of the membrane. The helical transmembrane segment at 213–233 (SWVVGIMLSVTLVKLLLVLYC) threads the bilayer. The Cytoplasmic portion of the chain corresponds to 234 to 251 (RSFTNEIVKAYAQDHFFD). A helical membrane pass occupies residues 252-272 (VITNIIGLIAVILANYIDYWI). Position 273 (Asp273) is a topological domain, vacuolar. Residues 274–294 (PVGAIILALYTIRTWSMTVLE) traverse the membrane as a helical segment. At 295–394 (NVNSLVGKSA…HKPEHARSHC (100 aa)) the chain is on the cytoplasmic side.

Belongs to the cation diffusion facilitator (CDF) transporter (TC 2.A.4) family. SLC30A subfamily. In terms of tissue distribution, widely expressed.

It is found in the prevacuolar compartment membrane. The protein localises to the golgi apparatus membrane. Functionally, cation/proton antiporter involved in endogenous manganese tolerance probably through vesicular trafficking and exocytosis. This Arabidopsis thaliana (Mouse-ear cress) protein is Metal tolerance protein 11 (MTP11).